Reading from the N-terminus, the 141-residue chain is Hemoglobin subunit beta-C (141 aa).

The 141-residue stretch at 1 to 141 (PNKALITGFW…VASALAHRYH (141 aa)) folds into the Globin domain. Heme b contacts are provided by histidine 58 and histidine 87.

Belongs to the globin family. As to quaternary structure, heterotetramer of two alpha chains and two beta chains. In terms of tissue distribution, red blood cells.

Involved in oxygen transport from the lung to the various peripheral tissues. In Ammotragus lervia (Barbary sheep), this protein is Hemoglobin subunit beta-C.